A 495-amino-acid chain; its full sequence is ATP synthase subunit beta, chloroplastic (495 aa).

Position 172 to 179 (172 to 179) interacts with ATP; the sequence is GGAGVGKT.

The protein belongs to the ATPase alpha/beta chains family. F-type ATPases have 2 components, CF(1) - the catalytic core - and CF(0) - the membrane proton channel. CF(1) has five subunits: alpha(3), beta(3), gamma(1), delta(1), epsilon(1). CF(0) has four main subunits: a(1), b(1), b'(1) and c(9-12).

It localises to the plastid. Its subcellular location is the chloroplast thylakoid membrane. It carries out the reaction ATP + H2O + 4 H(+)(in) = ADP + phosphate + 5 H(+)(out). In terms of biological role, produces ATP from ADP in the presence of a proton gradient across the membrane. The catalytic sites are hosted primarily by the beta subunits. This Barnardia japonica (Chinese squill) protein is ATP synthase subunit beta, chloroplastic.